Reading from the N-terminus, the 192-residue chain is Ras-like GTP-binding protein Rho1 (192 aa).

12–19 (GDGACGKT) lines the GTP pocket. An Effector region motif is present at residues 34-42 (YVPTVFENY). Residues 59–63 (DTAGQ) and 117–120 (NKKD) contribute to the GTP site. The residue at position 189 (C189) is a Cysteine methyl ester. A lipid anchor (S-geranylgeranyl cysteine) is attached at C189. Residues 190-192 (LLL) constitute a propeptide, removed in mature form.

Belongs to the small GTPase superfamily. Rho family. Interacts with capu. Interacts (via REM repeats) with Pkn (via N-terminus). Interacts (via N-terminus) with wash (via N-terminus). May interact with dia/diaphanous (via CBD/FH3 domain). Expressed in hemocytes (at protein level).

Its subcellular location is the cell membrane. The protein resides in the cytoplasm. It is found in the cytoskeleton. It localises to the apical cell membrane. The protein localises to the lateral cell membrane. Its function is as follows. Has a role in regulating actin cytoskeletal organization: required during early development for proper execution of morphogenetic movements of individual cells and groups of cells important for the formation of the embryonic body plan. Plays a role in regulating dorsal closure during embryogenesis. During axis elongation, required for Rho-kinase Rok planar polarity and adherens junction localization as well as for generating a planar polarized distribution of the actin-binding protein Shrm. During embryogenesis, acts upstream of wash to regulate the developmental migration of tail hemocytes anteriorly along the ventral midline. May have a role in eye development. Involved in targeted recruitment of dia/diaphanous to apical membranes of polarized epithelial cells. This Drosophila melanogaster (Fruit fly) protein is Ras-like GTP-binding protein Rho1.